We begin with the raw amino-acid sequence, 208 residues long: Uracil phosphoribosyltransferase (208 aa).

5-phospho-alpha-D-ribose 1-diphosphate-binding positions include Arg78, Arg103, and 130 to 138 (DPMLATGGS). Uracil is bound by residues Ile193 and 198 to 200 (GDA). A 5-phospho-alpha-D-ribose 1-diphosphate-binding site is contributed by Asp199.

Belongs to the UPRTase family. Mg(2+) serves as cofactor.

It catalyses the reaction UMP + diphosphate = 5-phospho-alpha-D-ribose 1-diphosphate + uracil. The protein operates within pyrimidine metabolism; UMP biosynthesis via salvage pathway; UMP from uracil: step 1/1. Allosterically activated by GTP. Functionally, catalyzes the conversion of uracil and 5-phospho-alpha-D-ribose 1-diphosphate (PRPP) to UMP and diphosphate. This is Uracil phosphoribosyltransferase from Neisseria gonorrhoeae (strain ATCC 700825 / FA 1090).